The chain runs to 345 residues: D-alanine--D-alanine ligase (345 aa).

Residues 137–342 (KAAFSAAGLP…LEELVHQLLE (206 aa)) enclose the ATP-grasp domain. 169–224 (ETQLGYPCFIKPANLGSSVGISKATNRSELQAGLDLAASHDSRLLVEKGLQVRELE) serves as a coordination point for ATP. Mg(2+) is bound by residues Asp295, Glu309, and Asn311.

This sequence belongs to the D-alanine--D-alanine ligase family. Mg(2+) is required as a cofactor. It depends on Mn(2+) as a cofactor.

It is found in the cytoplasm. It carries out the reaction 2 D-alanine + ATP = D-alanyl-D-alanine + ADP + phosphate + H(+). It participates in cell wall biogenesis; peptidoglycan biosynthesis. Cell wall formation. This is D-alanine--D-alanine ligase from Synechococcus sp. (strain RCC307).